We begin with the raw amino-acid sequence, 451 residues long: UPF0210 protein CLH_1879 (451 aa).

Belongs to the UPF0210 family. Homodimer.

The sequence is that of UPF0210 protein CLH_1879 from Clostridium botulinum (strain Alaska E43 / Type E3).